A 194-amino-acid chain; its full sequence is Large ribosomal subunit protein uL6m (194 aa).

Belongs to the universal ribosomal protein uL6 family.

It localises to the mitochondrion. This Prototheca wickerhamii protein is Large ribosomal subunit protein uL6m (RPL6).